Here is a 231-residue protein sequence, read N- to C-terminus: Phosphoglycolate phosphatase (231 aa).

D9 functions as the Nucleophile in the catalytic mechanism. 2 residues coordinate Mg(2+): D9 and D11. D11 (proton donor) is an active-site residue. K154 is a binding site for substrate. Mg(2+) is bound by residues D177 and D181.

It belongs to the archaeal SPP-like hydrolase family. In terms of assembly, homodimer. Requires Mg(2+) as cofactor.

It catalyses the reaction 2-phosphoglycolate + H2O = glycolate + phosphate. Functionally, catalyzes the dephosphorylation of 2-phosphoglycolate. Has phosphatase activity towards p-nitrophenylphosphate (in vitro). In Pyrococcus horikoshii (strain ATCC 700860 / DSM 12428 / JCM 9974 / NBRC 100139 / OT-3), this protein is Phosphoglycolate phosphatase.